The sequence spans 472 residues: Sporozoite surface protein P36p (472 aa).

The N-terminal stretch at 1 to 23 (MMKRRRIFMYYCFCFLLKYVAFS) is a signal peptide. N-linked (GlcNAc...) asparagine glycosylation is found at Asn-24, Asn-29, Asn-93, Asn-112, and Asn-185. 2 6-Cys domains span residues 24–157 (NVTN…FKKM) and 160–299 (KIKG…TSKN). 5 disulfides stabilise this stretch: Cys-64-Cys-138, Cys-81-Cys-136, Cys-164-Cys-188, Cys-202-Cys-281, and Cys-222-Cys-279. N-linked (GlcNAc...) asparagine glycosylation is found at Asn-295, Asn-306, Asn-383, Asn-396, Asn-400, and Asn-416. The disordered stretch occupies residues 359–385 (KMDPSDEDESNENAHNGNRANKDANYS). A lipid anchor (GPI-anchor amidated serine) is attached at Ser-449. The propeptide at 450 to 472 (SSYYEVFNYFSIAFILIIHMLLW) is removed in mature form.

It is found in the cell surface. It localises to the cell membrane. Its function is as follows. Involved in sporozoite infection of hepatocytes and replication therein. In Plasmodium berghei (strain Anka), this protein is Sporozoite surface protein P36p (P52).